The primary structure comprises 569 residues: BTB/POZ domain-containing protein At3g50840 (569 aa).

The region spanning Ser18–Val87 is the BTB domain. Positions Glu194–Gln459 constitute an NPH3 domain. Low complexity predominate over residues Ile240–Ser259. The segment at Ile240–Asn261 is disordered. Phosphotyrosine is present on Tyr400.

This sequence belongs to the NPH3 family.

The protein operates within protein modification; protein ubiquitination. Its function is as follows. May act as a substrate-specific adapter of an E3 ubiquitin-protein ligase complex (CUL3-RBX1-BTB) which mediates the ubiquitination and subsequent proteasomal degradation of target proteins. The protein is BTB/POZ domain-containing protein At3g50840 of Arabidopsis thaliana (Mouse-ear cress).